The chain runs to 535 residues: MFSWLGTDDRRRKDPEVFQTVSEGLKKLYKSKLLPLEEHYRFHEFHSPALEDADFDNKPMVLLVGQYSTGKTTFIRYLLEQDFPGMRIGPEPTTDSFIAVMQGDMEGIIPGNALVVDPKKPFRKLNAFGNAFLNRFVCAQLPNPVLESISVIDTPGILSGEKQRISRGYDFAAVLEWFAERVDRIILLFDAHKLDISDEFSEVIKALKNHEDKMRVVLNKADQIETQQLMRVYGALMWSLGKIVNTPEVIRVYIGSFWSHPLLIPDNRKLFEAEEQDLFRDIQSLPRNAALRKLNDLIKRARLAKVHAYIISSLKKEMPSVFGKDNKKKELVNNLAEIYGRIEREHQISPGDFPNLKRMQDQLQAQDFSKFQPLKSKLLEVVDDMLAHDIAQLMVLVRQEESQRPIQMVKGGAFEGTLHGPFGHGYGEGAGEGIDDAEWVVARDKPMYDEIFYTLSPVDGKITGANAKKEMVRSKLPNSVLGKIWKLADIDKDGMLDDDEFALANHLIKVKLEGHELPNELPAHLLPPSKRKVAE.

Met-1 is subject to N-acetylmethionine. One can recognise a Dynamin-type G domain in the interval 55 to 286 (FDNKPMVLLV…DLFRDIQSLP (232 aa)). The interval 65-72 (GQYSTGKT) is G1 motif. 65–72 (GQYSTGKT) serves as a coordination point for ATP. The G2 motif stretch occupies residues 91-92 (EP). Residues 153 to 156 (DTPG) are G3 motif. A coiled-coil region spans residues 198-227 (DEFSEVIKALKNHEDKMRVVLNKADQIETQ). Positions 219–222 (NKAD) are G4 motif. Lys-220 lines the ATP pocket. Position 243 (Ile-243) is a region of interest, G5 motif. Trp-258 contributes to the ATP binding site. Residue Lys-315 forms a Glycyl lysine isopeptide (Lys-Gly) (interchain with G-Cter in SUMO) linkage. Residues Ser-349 and Ser-456 each carry the phosphoserine modification. An EH domain is found at 444–532 (DKPMYDEIFY…AHLLPPSKRK (89 aa)). The EF-hand domain maps to 476–511 (LPNSVLGKIWKLADIDKDGMLDDDEFALANHLIKVK). 5 residues coordinate Ca(2+): Asp-489, Asp-491, Asp-493, Met-495, and Glu-500. A Glycyl lysine isopeptide (Lys-Gly) (interchain with G-Cter in SUMO) cross-link involves residue Lys-511.

Belongs to the TRAFAC class dynamin-like GTPase superfamily. Dynamin/Fzo/YdjA family. EHD subfamily. As to quaternary structure, homooligomer, and heterooligomer with EHD1, EHD2 and EHD4, ATP-binding is required for heterooligomerization. Interacts with PACSIN1. Interacts with PACSIN2. Interacts (via EH domain) with MICALL1. Interacts (via EH domain) with RAB11FIP2. Interacts with ANK2. As to expression, highly expressed in heart and brain and moderately expressed in kidney, liver, and placenta.

The protein localises to the recycling endosome membrane. It localises to the cell membrane. Its subcellular location is the cell projection. The protein resides in the cilium membrane. Its function is as follows. ATP- and membrane-binding protein that controls membrane reorganization/tubulation upon ATP hydrolysis. In vitro causes tubulation of endocytic membranes. Binding to phosphatidic acid induces its membrane tubulation activity. Plays a role in endocytic transport. Involved in early endosome to recycling endosome compartment (ERC), retrograde early endosome to Golgi, and endosome to plasma membrane (rapid recycling) protein transport. Involved in the regulation of Golgi maintenance and morphology. Involved in the recycling of internalized D1 dopamine receptor. Plays a role in cardiac protein trafficking probably implicating ANK2. Involved in the ventricular membrane targeting of SLC8A1 and CACNA1C and probably the atrial membrane localization of CACNA1GG and CACNA1H implicated in the regulation of atrial myocyte excitability and cardiac conduction. In conjunction with EHD4 may be involved in endocytic trafficking of KDR/VEGFR2 implicated in control of glomerular function. Involved in the rapid recycling of integrin beta-3 implicated in cell adhesion maintenance. Involved in the unidirectional retrograde dendritic transport of endocytosed BACE1 and in efficient sorting of BACE1 to axons implicating a function in neuronal APP processing. Plays a role in the formation of the ciliary vesicle, an early step in cilium biogenesis; possibly sharing redundant functions with EHD1. In Homo sapiens (Human), this protein is EH domain-containing protein 3.